We begin with the raw amino-acid sequence, 191 residues long: Octanoyltransferase (191 aa).

Residues 10–185 (ENSHDEIWLV…NILALLNNPP (176 aa)) form the BPL/LPL catalytic domain. Substrate contacts are provided by residues 49–56 (RGGQVTYH), 116–118 (SLG), and 129–131 (GLA). The active-site Acyl-thioester intermediate is the C147.

This sequence belongs to the LipB family.

Its subcellular location is the cytoplasm. It catalyses the reaction octanoyl-[ACP] + L-lysyl-[protein] = N(6)-octanoyl-L-lysyl-[protein] + holo-[ACP] + H(+). It functions in the pathway protein modification; protein lipoylation via endogenous pathway; protein N(6)-(lipoyl)lysine from octanoyl-[acyl-carrier-protein]: step 1/2. In terms of biological role, catalyzes the transfer of endogenously produced octanoic acid from octanoyl-acyl-carrier-protein onto the lipoyl domains of lipoate-dependent enzymes. Lipoyl-ACP can also act as a substrate although octanoyl-ACP is likely to be the physiological substrate. The chain is Octanoyltransferase from Salmonella choleraesuis (strain SC-B67).